The sequence spans 259 residues: Diaminopimelate epimerase (259 aa).

Asparagine 14, glutamine 42, and asparagine 60 together coordinate substrate. Residue cysteine 69 is the Proton donor of the active site. Substrate contacts are provided by residues 70–71, asparagine 151, asparagine 184, and 202–203; these read GN and ER. Cysteine 211 acts as the Proton acceptor in catalysis. 212 to 213 lines the substrate pocket; sequence GS.

The protein belongs to the diaminopimelate epimerase family. In terms of assembly, homodimer.

Its subcellular location is the cytoplasm. The enzyme catalyses (2S,6S)-2,6-diaminopimelate = meso-2,6-diaminopimelate. It participates in amino-acid biosynthesis; L-lysine biosynthesis via DAP pathway; DL-2,6-diaminopimelate from LL-2,6-diaminopimelate: step 1/1. Functionally, catalyzes the stereoinversion of LL-2,6-diaminopimelate (L,L-DAP) to meso-diaminopimelate (meso-DAP), a precursor of L-lysine and an essential component of the bacterial peptidoglycan. The chain is Diaminopimelate epimerase from Wolbachia sp. subsp. Brugia malayi (strain TRS).